A 205-amino-acid polypeptide reads, in one-letter code: Small ribosomal subunit protein uS4 (205 aa).

A disordered region spans residues 20–47; sequence WGRSKSPLNRGKENPPGQHGQRRKKPSD. An S4 RNA-binding domain is found at 94–154; sequence CRLDAVVYRL…TKSKDMALIL (61 aa).

This sequence belongs to the universal ribosomal protein uS4 family. In terms of assembly, part of the 30S ribosomal subunit. Contacts protein S5. The interaction surface between S4 and S5 is involved in control of translational fidelity.

In terms of biological role, one of the primary rRNA binding proteins, it binds directly to 16S rRNA where it nucleates assembly of the body of the 30S subunit. Functionally, with S5 and S12 plays an important role in translational accuracy. The chain is Small ribosomal subunit protein uS4 from Paramagnetospirillum magneticum (strain ATCC 700264 / AMB-1) (Magnetospirillum magneticum).